The sequence spans 944 residues: Leucine--tRNA ligase (944 aa).

The short motif at 40-51 (PYPSGAGLHVGH) is the 'HIGH' region element. Residues 718-722 (KMSKS) carry the 'KMSKS' region motif. K721 contacts ATP.

The protein belongs to the class-I aminoacyl-tRNA synthetase family.

Its subcellular location is the cytoplasm. The catalysed reaction is tRNA(Leu) + L-leucine + ATP = L-leucyl-tRNA(Leu) + AMP + diphosphate. This is Leucine--tRNA ligase from Phocaeicola vulgatus (strain ATCC 8482 / DSM 1447 / JCM 5826 / CCUG 4940 / NBRC 14291 / NCTC 11154) (Bacteroides vulgatus).